The primary structure comprises 260 residues: Isoprenyl transferase (260 aa).

D38 is a catalytic residue. D38 contacts Mg(2+). Substrate-binding positions include 39–42 (GNGR), W43, R51, H55, and 83–85 (STE). N86 acts as the Proton acceptor in catalysis. Substrate is bound by residues W87, R89, R206, and 212–214 (RLS). E225 is a binding site for Mg(2+).

This sequence belongs to the UPP synthase family. Homodimer. Requires Mg(2+) as cofactor.

Its function is as follows. Catalyzes the condensation of isopentenyl diphosphate (IPP) with allylic pyrophosphates generating different type of terpenoids. The protein is Isoprenyl transferase of Heliobacterium mobile (Heliobacillus mobilis).